Reading from the N-terminus, the 426-residue chain is Dihydroorotase (426 aa).

The Zn(2+) site is built by His58 and His60. Substrate-binding positions include 60–62 (HLR) and Asn92. Zn(2+)-binding residues include Asp150, His177, and His230. Asn276 is a substrate binding site. Asp303 lines the Zn(2+) pocket. Residue Asp303 is part of the active site. Substrate contacts are provided by residues His307 and 321 to 322 (FG).

The protein belongs to the metallo-dependent hydrolases superfamily. DHOase family. Class I DHOase subfamily. Zn(2+) serves as cofactor.

The enzyme catalyses (S)-dihydroorotate + H2O = N-carbamoyl-L-aspartate + H(+). The protein operates within pyrimidine metabolism; UMP biosynthesis via de novo pathway; (S)-dihydroorotate from bicarbonate: step 3/3. Functionally, catalyzes the reversible cyclization of carbamoyl aspartate to dihydroorotate. In Listeria monocytogenes serotype 4a (strain HCC23), this protein is Dihydroorotase.